Here is a 230-residue protein sequence, read N- to C-terminus: Complex I assembly factor TMEM126B, mitochondrial (230 aa).

Phosphoserine is present on S34. 4 helical membrane-spanning segments follow: residues 72–92 (IYQM…SNFL), 110–130 (LATL…IDAL), 141–161 (VFRS…SLAF), and 199–219 (IPLV…YAVF).

Belongs to the TMEM126 family. As to quaternary structure, part of the mitochondrial complex I assembly/MCIA complex that comprises at least the core subunits TMEM126B, NDUFAF1, ECSIT and ACAD9 and complement subunits such as COA1 and TMEM186. Associates with the intermediate 370 kDa subcomplex of incompletely assembled complex I. Interacts with TMEM70.

The protein localises to the mitochondrion membrane. In terms of biological role, as part of the MCIA complex, involved in the assembly of the mitochondrial complex I. Participates in constructing the membrane arm of complex I. In Homo sapiens (Human), this protein is Complex I assembly factor TMEM126B, mitochondrial.